Reading from the N-terminus, the 474-residue chain is uncharacterized protein (474 aa).

Residues 374–398 (GLICYLALFSISLMIENIIGLTISL) traverse the membrane as a helical segment.

The protein resides in the membrane. This is an uncharacterized protein from Borreliella burgdorferi (strain ATCC 35210 / DSM 4680 / CIP 102532 / B31) (Borrelia burgdorferi).